A 265-amino-acid chain; its full sequence is SPbeta prophage-derived uncharacterized protein YomU (265 aa).

The interval K238–E265 is disordered. The span at D249–E265 shows a compositional bias: polar residues.

This Bacillus subtilis (strain 168) protein is SPbeta prophage-derived uncharacterized protein YomU (yomU).